Reading from the N-terminus, the 443-residue chain is Xaa-Pro dipeptidase (443 aa).

5 residues coordinate Mn(2+): D246, D257, H339, E384, and E423.

The protein belongs to the peptidase M24B family. Bacterial-type prolidase subfamily. It depends on Mn(2+) as a cofactor.

The catalysed reaction is Xaa-L-Pro dipeptide + H2O = an L-alpha-amino acid + L-proline. In terms of biological role, splits dipeptides with a prolyl residue in the C-terminal position. The protein is Xaa-Pro dipeptidase of Escherichia coli O157:H7.